The following is a 256-amino-acid chain: Hydroxyacylglutathione hydrolase (256 aa).

The Zn(2+) site is built by His-57, His-59, Asp-61, His-62, His-115, Asp-134, and His-172.

It belongs to the metallo-beta-lactamase superfamily. Glyoxalase II family. As to quaternary structure, monomer. Zn(2+) serves as cofactor.

It catalyses the reaction an S-(2-hydroxyacyl)glutathione + H2O = a 2-hydroxy carboxylate + glutathione + H(+). The protein operates within secondary metabolite metabolism; methylglyoxal degradation; (R)-lactate from methylglyoxal: step 2/2. In terms of biological role, thiolesterase that catalyzes the hydrolysis of S-D-lactoyl-glutathione to form glutathione and D-lactic acid. In Rhodospirillum rubrum (strain ATCC 11170 / ATH 1.1.1 / DSM 467 / LMG 4362 / NCIMB 8255 / S1), this protein is Hydroxyacylglutathione hydrolase.